The primary structure comprises 68 residues: Large ribosomal subunit protein uL29 (68 aa).

The protein belongs to the universal ribosomal protein uL29 family.

This Persephonella marina (strain DSM 14350 / EX-H1) protein is Large ribosomal subunit protein uL29.